The following is a 125-amino-acid chain: Large ribosomal subunit protein bL12 (125 aa).

The protein belongs to the bacterial ribosomal protein bL12 family. In terms of assembly, homodimer. Part of the 50S ribosomal subunit; present in 6 copies per ribosome. Forms part of the ribosomal stalk which helps the ribosome interact with GTP-bound translation factors. Forms a heptameric L10(L12)2(L12)2(L12)2 complex, where L10 forms an elongated spine to which 3 L12 dimers bind in a sequential fashion.

Functionally, forms part of the ribosomal stalk which helps the ribosome interact with GTP-bound translation factors. Is thus essential for accurate translation. The sequence is that of Large ribosomal subunit protein bL12 from Agrobacterium fabrum (strain C58 / ATCC 33970) (Agrobacterium tumefaciens (strain C58)).